A 467-amino-acid polypeptide reads, in one-letter code: Argininosuccinate lyase (467 aa).

It belongs to the lyase 1 family. Argininosuccinate lyase subfamily.

It is found in the cytoplasm. It carries out the reaction 2-(N(omega)-L-arginino)succinate = fumarate + L-arginine. It participates in amino-acid biosynthesis; L-arginine biosynthesis; L-arginine from L-ornithine and carbamoyl phosphate: step 3/3. This is Argininosuccinate lyase from Anaeromyxobacter sp. (strain K).